Consider the following 608-residue polypeptide: UvrABC system protein C (608 aa).

Residues 16-94 (NRPGVYRMFD…IKEWRPPYNI (79 aa)) form the GIY-YIG domain. The UVR domain maps to 204–239 (NALADELNVGMEQAAMRLDFEKAAELRDQVAILRRV).

It belongs to the UvrC family. Interacts with UvrB in an incision complex.

It is found in the cytoplasm. The UvrABC repair system catalyzes the recognition and processing of DNA lesions. UvrC both incises the 5' and 3' sides of the lesion. The N-terminal half is responsible for the 3' incision and the C-terminal half is responsible for the 5' incision. This is UvrABC system protein C from Pseudomonas aeruginosa (strain LESB58).